The sequence spans 230 residues: MAVGKKLVKAREGIDREKLYAIADAIKLVKERATAKFDETIEVAINLGVDPRHADQMVRGVVTLPNGTGRTLRVGVFARGAKADEAKAAGADVVGAEDLVEIVQGGKIEFDRCIATPDMMPLVGRLGKVLGPRGMMPNPKIGTVTMDVAGAVKGAKGGSVEFRVEKAGIIQAGVGKASFSEEKLVENIKALADAVVKAKPAGAKGTYVQRVAVSSTMGPGVKVEPGSLNS.

Belongs to the universal ribosomal protein uL1 family. As to quaternary structure, part of the 50S ribosomal subunit.

In terms of biological role, binds directly to 23S rRNA. The L1 stalk is quite mobile in the ribosome, and is involved in E site tRNA release. Functionally, protein L1 is also a translational repressor protein, it controls the translation of the L11 operon by binding to its mRNA. In Afipia carboxidovorans (strain ATCC 49405 / DSM 1227 / KCTC 32145 / OM5) (Oligotropha carboxidovorans), this protein is Large ribosomal subunit protein uL1.